A 508-amino-acid polypeptide reads, in one-letter code: Bifunctional purine biosynthesis protein PurH (508 aa).

The 145-residue stretch at 1–145 folds into the MGS-like domain; sequence MIKRALLSTY…KNYKDVIVVV (145 aa).

This sequence belongs to the PurH family.

The enzyme catalyses (6R)-10-formyltetrahydrofolate + 5-amino-1-(5-phospho-beta-D-ribosyl)imidazole-4-carboxamide = 5-formamido-1-(5-phospho-D-ribosyl)imidazole-4-carboxamide + (6S)-5,6,7,8-tetrahydrofolate. The catalysed reaction is IMP + H2O = 5-formamido-1-(5-phospho-D-ribosyl)imidazole-4-carboxamide. Its pathway is purine metabolism; IMP biosynthesis via de novo pathway; 5-formamido-1-(5-phospho-D-ribosyl)imidazole-4-carboxamide from 5-amino-1-(5-phospho-D-ribosyl)imidazole-4-carboxamide (10-formyl THF route): step 1/1. The protein operates within purine metabolism; IMP biosynthesis via de novo pathway; IMP from 5-formamido-1-(5-phospho-D-ribosyl)imidazole-4-carboxamide: step 1/1. The chain is Bifunctional purine biosynthesis protein PurH from Petrotoga mobilis (strain DSM 10674 / SJ95).